We begin with the raw amino-acid sequence, 407 residues long: Putative cell wall shaping protein YabE (407 aa).

Positions 1–31 (MKKLFSVKLSKSKVILVAACLLLAGSGTAYA) are cleaved as a signal peptide. The G5 domain occupies 206–286 (ITRIEKVTDV…DKVIAVGTKQ (81 aa)).

Suggested to be involved in cell wall modification. In Bacillus subtilis (strain 168), this protein is Putative cell wall shaping protein YabE (yabE).